The primary structure comprises 474 residues: 3-isopropylmalate dehydratase large subunit (474 aa).

Positions 355, 415, and 418 each coordinate [4Fe-4S] cluster.

It belongs to the aconitase/IPM isomerase family. LeuC type 1 subfamily. In terms of assembly, heterodimer of LeuC and LeuD. The cofactor is [4Fe-4S] cluster.

The catalysed reaction is (2R,3S)-3-isopropylmalate = (2S)-2-isopropylmalate. It participates in amino-acid biosynthesis; L-leucine biosynthesis; L-leucine from 3-methyl-2-oxobutanoate: step 2/4. Functionally, catalyzes the isomerization between 2-isopropylmalate and 3-isopropylmalate, via the formation of 2-isopropylmaleate. The sequence is that of 3-isopropylmalate dehydratase large subunit from Shewanella sp. (strain MR-7).